A 350-amino-acid polypeptide reads, in one-letter code: Probable nicotinate-nucleotide adenylyltransferase/Ap4A hydrolase (350 aa).

The naMN adenylyltransferase stretch occupies residues 1-187 (MKQKIIIFGG…YINTNHLYLI (187 aa)). An ap4A hydrolase region spans residues 196–350 (DKRFQHCLRV…LKYVQNLVKD (155 aa)). The HD domain occupies 198 to 310 (RFQHCLRVGK…VYLADKLEPN (113 aa)). His-201 contributes to the ADP binding site. His-201, His-230, and Asp-231 together coordinate Fe cation. ADP-binding positions include 231 to 234 (DLAK), His-261, 287 to 288 (HT), Asp-305, and Arg-311. Position 305 (Asp-305) interacts with Fe cation.

This sequence in the N-terminal section; belongs to the NadD family. In the C-terminal section; belongs to the Ap4A hydrolase YqeK family.

It carries out the reaction nicotinate beta-D-ribonucleotide + ATP + H(+) = deamido-NAD(+) + diphosphate. It catalyses the reaction P(1),P(4)-bis(5'-adenosyl) tetraphosphate + H2O = 2 ADP + 2 H(+). It participates in cofactor biosynthesis; NAD(+) biosynthesis; deamido-NAD(+) from nicotinate D-ribonucleotide: step 1/1. Catalyzes the reversible adenylation of nicotinate mononucleotide (NaMN) to nicotinic acid adenine dinucleotide (NaAD). Functionally, hydrolyzes diadenosine 5',5'''-P1,P4-tetraphosphate (Ap4A) to yield ADP. The chain is Probable nicotinate-nucleotide adenylyltransferase/Ap4A hydrolase from Mycoplasma genitalium (strain ATCC 33530 / DSM 19775 / NCTC 10195 / G37) (Mycoplasmoides genitalium).